A 367-amino-acid polypeptide reads, in one-letter code: tRNA-dihydrouridine(20a/20b) synthase [NAD(P)+] (367 aa).

Residues 45 to 47 and Q99 each bind FMN; that span reads PMV. Residue C128 is the Proton donor of the active site. Residues K169, H197, 231-233, and 255-256 each bind FMN; these read NGD and VR.

The protein belongs to the Dus family. Dus4 subfamily. It depends on FMN as a cofactor.

The enzyme catalyses 5,6-dihydrouridine(20a) in tRNA + NADP(+) = uridine(20a) in tRNA + NADPH + H(+). It carries out the reaction 5,6-dihydrouridine(20a) in tRNA + NAD(+) = uridine(20a) in tRNA + NADH + H(+). It catalyses the reaction 5,6-dihydrouridine(20b) in tRNA + NAD(+) = uridine(20b) in tRNA + NADH + H(+). The catalysed reaction is 5,6-dihydrouridine(20b) in tRNA + NADP(+) = uridine(20b) in tRNA + NADPH + H(+). The enzyme catalyses a 5,6-dihydrouridine in mRNA + NAD(+) = a uridine in mRNA + NADH + H(+). It carries out the reaction a 5,6-dihydrouridine in mRNA + NADP(+) = a uridine in mRNA + NADPH + H(+). In terms of biological role, catalyzes the synthesis of dihydrouridine, a modified base found in the D-loop of most tRNAs. Specifically modifies U20a and U20b in cytoplasmic tRNAs. Also able to mediate dihydrouridylation of some mRNAs, thereby affecting their translation. In Saccharomyces cerevisiae (strain ATCC 204508 / S288c) (Baker's yeast), this protein is tRNA-dihydrouridine(20a/20b) synthase [NAD(P)+].